Here is a 699-residue protein sequence, read N- to C-terminus: Cyclic AMP-dependent transcription factor ATF-6 beta (699 aa).

Alanine 2 carries the N-acetylalanine modification. Topologically, residues 2–393 (AELMLLSEIA…GLKLGSGNRK (392 aa)) are cytoplasmic. Disordered regions lie at residues 59 to 114 (SLDV…QVPG), 218 to 246 (VQISMGPSPDSSSGKAPATRKPPLQPKPV), and 290 to 313 (EGPAPAAPRPERKSIVPAPMPGNS). The segment covering 68-78 (PPEPPWDPLPI) has biased composition (pro residues). Residues 86-109 (SEPSSPCSSSSLSSESSHLSTEPP) show a composition bias toward low complexity. Positions 322-385 (LLKRQQRMIK…EALLAENSGL (64 aa)) constitute a bZIP domain. The basic motif stretch occupies residues 324–344 (KRQQRMIKNRESACQSRRKKK). Residues 347–354 (LQGLEARL) are leucine-zipper. A helical; Signal-anchor for type II membrane protein transmembrane segment spans residues 394–414 (VVCIMVFLLFIAFNFGPVSIS). At 415 to 699 (EPPPAPMSPR…ASQPLYLNHP (285 aa)) the chain is on the lumenal side. Residues 417–474 (PPAPMSPRMSREEPRPQRHLLGFSEPGPAHGMEPLREAAQSPGEQQPSSAGRPSFRNL) are disordered. A compositionally biased stretch (polar residues) spans 458–467 (PGEQQPSSAG). 2 N-linked (GlcNAc...) asparagine glycosylation sites follow: asparagine 473 and asparagine 502. Over residues 519–529 (RHQRGRRKIPH) the composition is skewed to basic residues. The tract at residues 519–563 (RHQRGRRKIPHRAQERQKSQLRKKSPPVKPVPTQPPGPPERDPVG) is disordered. Pro residues predominate over residues 545-556 (PVKPVPTQPPGP). N-linked (GlcNAc...) asparagine glycosylation is found at asparagine 607, asparagine 624, and asparagine 673. Residues 657–699 (STVPPSLRKQPSPSPGNTTGGPLPGSAASPAHQASQPLYLNHP) are disordered. Residues 680 to 693 (PGSAASPAHQASQP) are compositionally biased toward low complexity.

It belongs to the bZIP family. ATF subfamily. Homodimer and heterodimer with ATF6-alpha. The dimer interacts with the nuclear transcription factor Y (NF-Y) trimer through direct binding to NF-Y subunit C (NF-YC). Post-translationally, N-glycosylated. In terms of processing, during unfolded protein response, a fragment of approximately 60 kDa containing the cytoplasmic transcription factor domain is released by proteolysis. The cleavage is probably performed sequentially by site-1 (MBTPS1, S1P) and site-2 (MBTPS2, S2P) proteases.

It localises to the endoplasmic reticulum membrane. The protein resides in the nucleus. Its function is as follows. Precursor of the transcription factor form (Processed cyclic AMP-dependent transcription factor ATF-6 beta), which is embedded in the endoplasmic reticulum membrane. Endoplasmic reticulum stress promotes processing of this form, releasing the transcription factor form that translocates into the nucleus, where it activates transcription of genes involved in the unfolded protein response (UPR). Transcription factor that acts in the unfolded protein response (UPR) pathway by activating UPR target genes induced during ER stress. Binds DNA on the 5'-CCAC[GA]-3' half of the ER stress response element (ERSE) (5'-CCAATN(9)CCAC[GA]-3') when NF-Y is bound to ERSE. This Mus musculus (Mouse) protein is Cyclic AMP-dependent transcription factor ATF-6 beta (Atf6b).